The chain runs to 729 residues: Carbon monoxide dehydrogenase/acetyl-CoA synthase subunit alpha (729 aa).

Positions 506, 509, 518, and 528 each coordinate [4Fe-4S] cluster. Residue Cys-509 coordinates Ni(2+). Residues Cys-595, Gly-596, and Cys-597 each coordinate Ni(2+).

As to quaternary structure, tetramer of two alpha and two beta chains. Ni cation is required as a cofactor. [4Fe-4S] cluster serves as cofactor.

The enzyme catalyses Co(I)-[corrinoid Fe-S protein] + acetyl-CoA + H(+) = methyl-Co(III)-[corrinoid Fe-S protein] + CO + CoA. Functionally, the beta subunit generates CO from CO(2), while the alpha subunit (this protein) combines the CO with CoA and a methyl group to form acetyl-CoA. The methyl group, which is incorporated into acetyl-CoA, is transferred to the alpha subunit by a corrinoid iron-sulfur protein. The protein is Carbon monoxide dehydrogenase/acetyl-CoA synthase subunit alpha of Moorella thermoacetica (Clostridium thermoaceticum).